Reading from the N-terminus, the 290-residue chain is Elongation factor Ts (290 aa).

Residues 80–83 (TDFV) form an involved in Mg(2+) ion dislocation from EF-Tu region.

The protein belongs to the EF-Ts family.

Its subcellular location is the cytoplasm. Functionally, associates with the EF-Tu.GDP complex and induces the exchange of GDP to GTP. It remains bound to the aminoacyl-tRNA.EF-Tu.GTP complex up to the GTP hydrolysis stage on the ribosome. This is Elongation factor Ts from Neorickettsia sennetsu (strain ATCC VR-367 / Miyayama) (Ehrlichia sennetsu).